Reading from the N-terminus, the 1103-residue chain is Centrosomal protein of 126 kDa (1103 aa).

Residues 1-12 (MLAGRPGAQSAG) show a composition bias toward low complexity. The disordered stretch occupies residues 1–36 (MLAGRPGAQSAGAGVGAGPPDAPGARDGGGRPRPGA). Coiled-coil stretches lie at residues 43-116 (HLEK…FQRA) and 182-222 (QKHL…KLLE). Disordered stretches follow at residues 380-409 (NTAESNVVRASDPTEGAVQRERPAQMESPT) and 723-812 (ESKA…PGQS). A compositionally biased stretch (basic and acidic residues) spans 723–735 (ESKAPVHASDSKT). The span at 736 to 748 (QKTKPQRGVKFTR) shows a compositional bias: basic residues. 2 stretches are compositionally biased toward polar residues: residues 763-784 (RKPTVSQPQTSSKANTVAQTQG) and 798-812 (NIKSGKNMQVSPGQS).

Interacts with DCTN1.

Its subcellular location is the midbody. The protein resides in the cytoplasm. The protein localises to the cytoskeleton. It is found in the microtubule organizing center. It localises to the centrosome. Its subcellular location is the cilium basal body. Participate in cytokinesis. Necessary for microtubules and mitotic spindle organization. Involved in primary cilium formation. This is Centrosomal protein of 126 kDa from Mus musculus (Mouse).